A 701-amino-acid chain; its full sequence is Type 3 secretion system secretin (701 aa).

Positions 1-21 are cleaved as a signal peptide; that stretch reads MRKALMWLPLLLIGLSPATWA. Residues 229–238 are compositionally biased toward gly residues; sequence RGNGLAGGGS. Positions 229–252 are disordered; it reads RGNGLAGGGSPDTPSLPMSSSGLD. Positions 240 to 252 are enriched in polar residues; it reads DTPSLPMSSSGLD.

It belongs to the bacterial secretin family. T3SS SctC subfamily. The core secretion machinery of the T3SS is composed of approximately 20 different proteins, including cytoplasmic components, a base, an export apparatus and a needle. This subunit is part of the base, which anchors the injectisome in the bacterial cell envelope. Forms a stable homooligomeric complex.

The protein resides in the cell outer membrane. Its function is as follows. Component of the type III secretion system (T3SS), also called injectisome, which is used to inject bacterial effector proteins into eukaryotic host cells. Forms a ring-shaped multimeric structure with an apparent central pore in the outer membrane. Involved in the secretion of a proteinaceous elicitor of the hypersensitivity response in plants. The chain is Type 3 secretion system secretin from Pseudomonas syringae pv. syringae.